The sequence spans 448 residues: Chromosomal replication initiator protein DnaA (448 aa).

Residues 1–85 (MHDNLPQIWE…EVHIVVPSEE (85 aa)) form a domain I, interacts with DnaA modulators region. The interval 85 to 110 (ERVGDTQNINARRSNAQSPIMGNSPL) is domain II. The interval 111 to 327 (ILNPKYTFDT…GALIRIVAYS (217 aa)) is domain III, AAA+ region. ATP contacts are provided by Gly-155, Gly-157, Lys-158, and Thr-159. The interval 328–448 (SLTNSEVTVE…DAIIKELKSD (121 aa)) is domain IV, binds dsDNA.

It belongs to the DnaA family. In terms of assembly, oligomerizes as a right-handed, spiral filament on DNA at oriC.

It is found in the cytoplasm. Functionally, plays an essential role in the initiation and regulation of chromosomal replication. ATP-DnaA binds to the origin of replication (oriC) to initiate formation of the DNA replication initiation complex once per cell cycle. Binds the DnaA box (a 9 base pair repeat at the origin) and separates the double-stranded (ds)DNA. Forms a right-handed helical filament on oriC DNA; dsDNA binds to the exterior of the filament while single-stranded (ss)DNA is stabiized in the filament's interior. The ATP-DnaA-oriC complex binds and stabilizes one strand of the AT-rich DNA unwinding element (DUE), permitting loading of DNA polymerase. After initiation quickly degrades to an ADP-DnaA complex that is not apt for DNA replication. Binds acidic phospholipids. The protein is Chromosomal replication initiator protein DnaA of Alkaliphilus metalliredigens (strain QYMF).